A 437-amino-acid polypeptide reads, in one-letter code: Glutamyl-tRNA reductase (437 aa).

Substrate-binding positions include 46-49, S111, 116-118, and Q122; these read TCNR and ERE. The active-site Nucleophile is the C47. 192-197 contributes to the NADP(+) binding site; that stretch reads GTGAYA. A disordered region spans residues 413 to 437; the sequence is PDVPEETAPSTRQDPSDTPRPRAVG. Residues 426–437 show a composition bias toward basic and acidic residues; the sequence is DPSDTPRPRAVG.

The protein belongs to the glutamyl-tRNA reductase family. Homodimer.

It carries out the reaction (S)-4-amino-5-oxopentanoate + tRNA(Glu) + NADP(+) = L-glutamyl-tRNA(Glu) + NADPH + H(+). Its pathway is porphyrin-containing compound metabolism; protoporphyrin-IX biosynthesis; 5-aminolevulinate from L-glutamyl-tRNA(Glu): step 1/2. In terms of biological role, catalyzes the NADPH-dependent reduction of glutamyl-tRNA(Glu) to glutamate 1-semialdehyde (GSA). The protein is Glutamyl-tRNA reductase of Kocuria rhizophila (strain ATCC 9341 / DSM 348 / NBRC 103217 / DC2201).